The sequence spans 88 residues: Large ribosomal subunit protein bL27 (88 aa).

Residues 1–23 (MAHKKAGGSSRNGRDSAGRRLGV) form a disordered region.

The protein belongs to the bacterial ribosomal protein bL27 family.

This Methylorubrum extorquens (strain CM4 / NCIMB 13688) (Methylobacterium extorquens) protein is Large ribosomal subunit protein bL27.